A 292-amino-acid chain; its full sequence is Protease HtpX (292 aa).

A run of 2 helical transmembrane segments spans residues 5–25 and 34–54; these read IFLFLLTNLAVLMLAGIVMSL and SGLLVMAAIFGFGGSFISLLL. Histidine 140 contributes to the Zn(2+) binding site. Glutamate 141 is a catalytic residue. Position 144 (histidine 144) interacts with Zn(2+). The next 2 membrane-spanning stretches (helical) occupy residues 155 to 175 and 193 to 213; these read LLQGVLNTFVIVLARVVGGII and IIVFALEMVFGLFATMIAMWF. Residue glutamate 218 coordinates Zn(2+).

It belongs to the peptidase M48B family. Zn(2+) is required as a cofactor.

It is found in the cell inner membrane. This Xanthomonas euvesicatoria pv. vesicatoria (strain 85-10) (Xanthomonas campestris pv. vesicatoria) protein is Protease HtpX.